A 510-amino-acid chain; its full sequence is P-(S)-hydroxymandelonitrile lyase (510 aa).

Positions 1–34 (MAVFISSSGSPGRATATTTTTTTLLLAVLAAAAA) are cleaved as a signal peptide. Residue 116-118 (NGG) participates in substrate binding. Intrachain disulfides connect cysteine 121-cysteine 377, cysteine 277-cysteine 289, and cysteine 313-cysteine 344. N-linked (GlcNAc...) asparagine glycosylation occurs at asparagine 172. 212-213 (ES) contacts substrate. Residue serine 213 is part of the active site. Asparagine 365 carries an N-linked (GlcNAc...) asparagine glycan. Catalysis depends on residues aspartate 414 and histidine 469. 465-469 (SGAGH) contributes to the substrate binding site.

The protein belongs to the peptidase S10 family. As to quaternary structure, heterotetramer of two A and two B chains. The A and B chains are linked by a disulfide bond. Post-translationally, the N-terminus of chain A is blocked. Primary leaves of seedlings.

The enzyme catalyses (S)-4-hydroxymandelonitrile = 4-hydroxybenzaldehyde + hydrogen cyanide. Its function is as follows. Involved in cyanogenesis, the release of HCN from injured tissues. Is involved in the catabolism of the cyanogenic glycoside dhurrin. In Sorghum bicolor (Sorghum), this protein is P-(S)-hydroxymandelonitrile lyase.